The sequence spans 277 residues: 3-methyl-2-oxobutanoate hydroxymethyltransferase (277 aa).

Mg(2+)-binding residues include Asp53 and Asp96. Residues Asp53 to Ser54, Asp96, and Lys126 contribute to the 3-methyl-2-oxobutanoate site. A Mg(2+)-binding site is contributed by Glu128. Glu195 serves as the catalytic Proton acceptor.

This sequence belongs to the PanB family. In terms of assembly, homodecamer; pentamer of dimers. The cofactor is Mg(2+).

The protein localises to the cytoplasm. It catalyses the reaction 3-methyl-2-oxobutanoate + (6R)-5,10-methylene-5,6,7,8-tetrahydrofolate + H2O = 2-dehydropantoate + (6S)-5,6,7,8-tetrahydrofolate. The protein operates within cofactor biosynthesis; (R)-pantothenate biosynthesis; (R)-pantoate from 3-methyl-2-oxobutanoate: step 1/2. Functionally, catalyzes the reversible reaction in which hydroxymethyl group from 5,10-methylenetetrahydrofolate is transferred onto alpha-ketoisovalerate to form ketopantoate. The protein is 3-methyl-2-oxobutanoate hydroxymethyltransferase of Pelodictyon phaeoclathratiforme (strain DSM 5477 / BU-1).